Consider the following 339-residue polypeptide: Glycerol-3-phosphate dehydrogenase [NAD(P)+] (339 aa).

The NADPH site is built by Ser-11, Trp-12, and Lys-109. Lys-109, Gly-140, and Ser-142 together coordinate sn-glycerol 3-phosphate. Residue Ala-144 participates in NADPH binding. Sn-glycerol 3-phosphate is bound by residues Lys-195, Asp-249, Ser-259, Arg-260, and Asn-261. The active-site Proton acceptor is the Lys-195. Arg-260 is a binding site for NADPH. The NADPH site is built by Val-284 and Glu-286.

Belongs to the NAD-dependent glycerol-3-phosphate dehydrogenase family.

It is found in the cytoplasm. The enzyme catalyses sn-glycerol 3-phosphate + NAD(+) = dihydroxyacetone phosphate + NADH + H(+). It catalyses the reaction sn-glycerol 3-phosphate + NADP(+) = dihydroxyacetone phosphate + NADPH + H(+). It functions in the pathway membrane lipid metabolism; glycerophospholipid metabolism. In terms of biological role, catalyzes the reduction of the glycolytic intermediate dihydroxyacetone phosphate (DHAP) to sn-glycerol 3-phosphate (G3P), the key precursor for phospholipid synthesis. This chain is Glycerol-3-phosphate dehydrogenase [NAD(P)+], found in Lactobacillus johnsonii (strain CNCM I-12250 / La1 / NCC 533).